We begin with the raw amino-acid sequence, 208 residues long: Small ribosomal subunit protein uS5 (208 aa).

The 64-residue stretch at 28 to 91 (LEERLIYANR…EKAKKNVIRV (64 aa)) folds into the S5 DRBM domain.

Belongs to the universal ribosomal protein uS5 family. In terms of assembly, part of the 30S ribosomal subunit. Contacts proteins S4 and S8.

Functionally, with S4 and S12 plays an important role in translational accuracy. Located at the back of the 30S subunit body where it stabilizes the conformation of the head with respect to the body. The protein is Small ribosomal subunit protein uS5 of Aquifex aeolicus (strain VF5).